Consider the following 269-residue polypeptide: Holocytochrome-c synthase (269 aa).

The disordered stretch occupies residues M1–D72. HRM repeat units lie at residues G25–H30 and E41–Q46.

The protein belongs to the cytochrome c-type heme lyase family.

It localises to the mitochondrion inner membrane. The protein resides in the mitochondrion intermembrane space. The enzyme catalyses holo-[cytochrome c] = apo-[cytochrome c] + heme b. Its function is as follows. Lyase that catalyzes the covalent linking of the heme group to the cytochrome C apoprotein to produce the mature functional cytochrome. The sequence is that of Holocytochrome-c synthase (CYC3) from Saccharomyces cerevisiae (strain ATCC 204508 / S288c) (Baker's yeast).